The following is a 73-amino-acid chain: UPF0337 protein lp_1708 (73 aa).

Basic and acidic residues-rich tracts occupy residues 1-35 (MSDV…REAQ) and 44-73 (KAKD…KSDD). Residues 1 to 73 (MSDVNKKFDS…KDKMKKKSDD (73 aa)) form a disordered region.

The protein belongs to the UPF0337 (CsbD) family.

The protein is UPF0337 protein lp_1708 of Lactiplantibacillus plantarum (strain ATCC BAA-793 / NCIMB 8826 / WCFS1) (Lactobacillus plantarum).